Here is a 484-residue protein sequence, read N- to C-terminus: Trigger factor (484 aa).

A PPIase FKBP-type domain is found at 162 to 243; sequence GDFISIDLSA…VKSVKERELP (82 aa). The interval 427 to 484 is disordered; that stretch reads DGNTIDTSEFFGKPPENDVTDLLDDDADGDAGVDADGDTENSAEPADADSADAAQGAG. A compositionally biased stretch (acidic residues) spans 444–476; it reads DVTDLLDDDADGDAGVDADGDTENSAEPADADS.

This sequence belongs to the FKBP-type PPIase family. Tig subfamily.

It localises to the cytoplasm. The enzyme catalyses [protein]-peptidylproline (omega=180) = [protein]-peptidylproline (omega=0). Its function is as follows. Involved in protein export. Acts as a chaperone by maintaining the newly synthesized protein in an open conformation. Functions as a peptidyl-prolyl cis-trans isomerase. This chain is Trigger factor, found in Mycobacterium marinum (strain ATCC BAA-535 / M).